Reading from the N-terminus, the 288-residue chain is Probable ketoamine kinase VC_1539 (288 aa).

An ATP-binding site is contributed by 92-94; it reads NYL. The active-site Proton acceptor is Asp195.

Belongs to the fructosamine kinase family.

Ketoamine kinase that phosphorylates ketoamines on the third carbon of the sugar moiety to generate ketoamine 3-phosphate. This is Probable ketoamine kinase VC_1539 from Vibrio cholerae serotype O1 (strain ATCC 39315 / El Tor Inaba N16961).